Consider the following 282-residue polypeptide: E3 ubiquitin-protein ligase SIAH1 (282 aa).

Residues 1–17 show a composition bias toward polar residues; sequence MSRQTATALPTGTSKCP. A disordered region spans residues 1–22; the sequence is MSRQTATALPTGTSKCPPSQRV. Ser-19 is modified (phosphoserine; by ATM and ATR). The RING-type zinc finger occupies 41 to 76; sequence CPVCFDYVLPPILQCQSGHLVCSNCRPKLTCCPTCR. An SBD region spans residues 90-282; the sequence is VANSVLFPCK…LGINVTISMC (193 aa). The SIAH-type zinc finger occupies 93 to 153; it reads SVLFPCKYAS…VMPHLMHQHK (61 aa). Cys-98, Cys-105, His-117, Cys-121, Cys-128, Cys-135, His-147, and His-152 together coordinate Zn(2+).

This sequence belongs to the SINA (Seven in absentia) family. In terms of assembly, homodimer. Component of some large E3 complex composed of UBE2D1, SIAH1, CACYBP/SIP, SKP1, APC and TBL1X. Interacts with UBE2I. Interacts with alpha-tubulin. Interacts with PEG10, which may inhibit its activity. Interacts with PEG3 and HIPK2. Interacts with group 1 glutamate receptors GRM1 and GRM5. Interacts with DAB1, which may inhibit its activity. Interacts with UBE2E2. Interacts with SNCAIP. Interacts with HIPK2; the interaction is promoted by DAZAP2 and results in SIAH1-mediated ubiquitination and subsequent proteasomal degradation of HIPK2. Interacts with DAZAP2; the interaction is decreased following phosphorylation of DAZAP2 by HIPK2. Interacts with GAPDH; leading to stabilize SIAH1. Interacts with Bassoon/BSN and Piccolo/PLCO; these interactions negatively regulate SIAH1 E3 ligase activity. Interacts with DCC. Interacts with AXIN1; catalyzes AXIN1 ubiquitination and subsequent proteasome-mediated ubiquitin-dependent degradation. Post-translationally, phosphorylated on Ser-19 by ATM and ATR. This phosphorylation disrupts SIAH1 interaction with HIPK2, and subsequent proteasomal degradation of HIPK2.

It is found in the cytoplasm. The protein localises to the nucleus. The enzyme catalyses S-ubiquitinyl-[E2 ubiquitin-conjugating enzyme]-L-cysteine + [acceptor protein]-L-lysine = [E2 ubiquitin-conjugating enzyme]-L-cysteine + N(6)-ubiquitinyl-[acceptor protein]-L-lysine.. It participates in protein modification; protein ubiquitination. In terms of biological role, E3 ubiquitin-protein ligase that mediates ubiquitination and subsequent proteasomal degradation of target proteins. E3 ubiquitin ligases accept ubiquitin from an E2 ubiquitin-conjugating enzyme in the form of a thioester and then directly transfers the ubiquitin to targeted substrates. Mediates E3 ubiquitin ligase activity either through direct binding to substrates or by functioning as the essential RING domain subunit of larger E3 complexes. Triggers the ubiquitin-mediated degradation of many substrates, including proteins involved in transcription regulation (ELL2, MYB, POU2AF1, PML and RBBP8), a cell surface receptor (DCC), cytoplasmic signal transduction molecules (KLF10/TIEG1 and NUMB), an antiapoptotic protein (BAG1), a microtubule motor protein (KIF22), a protein involved in synaptic vesicle function in neurons (SYP), a structural protein (CTNNB1) and SNCAIP. Confers constitutive instability to HIPK2 through proteasomal degradation. It is thereby involved in many cellular processes such as apoptosis, tumor suppression, cell cycle, axon guidance, transcription, spermatogenesis and TNF-alpha signaling. Has some overlapping function with SIAH2. Induces apoptosis in cooperation with PEG3. Upon nitric oxid (NO) generation that follows apoptotic stimulation, interacts with S-nitrosylated GAPDH, mediating the translocation of GAPDH to the nucleus. GAPDH acts as a stabilizer of SIAH1, facilitating the degradation of nuclear proteins. Mediates ubiquitination and degradation of EGLN2 and EGLN3 in response to the unfolded protein response (UPR), leading to their degradation and subsequent stabilization of ATF4. Also part of the Wnt signaling pathway in which it mediates the Wnt-induced ubiquitin-mediated proteasomal degradation of AXIN1. The protein is E3 ubiquitin-protein ligase SIAH1 (Siah1) of Rattus norvegicus (Rat).